We begin with the raw amino-acid sequence, 205 residues long: Small ribosomal subunit protein uS4 (205 aa).

The interval 19-45 (IWGRSKSPVNRREYGPGQHGQRRKGKL) is disordered. In terms of domain architecture, S4 RNA-binding spans 94 to 157 (RRLDAVVYRA…KQMALVLEAV (64 aa)).

Belongs to the universal ribosomal protein uS4 family. As to quaternary structure, part of the 30S ribosomal subunit. Contacts protein S5. The interaction surface between S4 and S5 is involved in control of translational fidelity.

One of the primary rRNA binding proteins, it binds directly to 16S rRNA where it nucleates assembly of the body of the 30S subunit. In terms of biological role, with S5 and S12 plays an important role in translational accuracy. This chain is Small ribosomal subunit protein uS4, found in Azorhizobium caulinodans (strain ATCC 43989 / DSM 5975 / JCM 20966 / LMG 6465 / NBRC 14845 / NCIMB 13405 / ORS 571).